A 782-amino-acid polypeptide reads, in one-letter code: Glucocorticoid receptor (782 aa).

The interval 1–20 (MDPKESLTPPSREEIPSSVL) is disordered. The interval 1–425 (MDPKESLTPP…SAATGPPPKL (425 aa)) is modulating. Residue Thr-8 is modified to Phosphothreonine. At Arg-24 the chain carries Omega-N-methylarginine. Residue Ser-46 is modified to Phosphoserine. A disordered region spans residues 48-79 (SLAAVSQPDSKQQRLAVDFPKGSGSNAQQPDL). Residues Ser-114, Ser-135, Ser-142, Ser-208, Ser-216, and Ser-231 each carry the phosphoserine modification. The tract at residues 130–184 (LSRSTSVPENPKSSASAAGPAAPAEKAFPKTHSDGAPEQPNVKGQTGTNGGNVKL) is disordered. Residues 140–155 (PKSSASAAGPAAPAEK) show a composition bias toward low complexity. A Glycyl lysine isopeptide (Lys-Gly) (interchain with G-Cter in SUMO2) cross-link involves residue Lys-263. The residue at position 272 (Ser-272) is a Phosphoserine. Residues Lys-282 and Lys-298 each participate in a glycyl lysine isopeptide (Lys-Gly) (interchain with G-Cter in SUMO); alternate cross-link. Residues Lys-282 and Lys-298 each participate in a glycyl lysine isopeptide (Lys-Gly) (interchain with G-Cter in SUMO2); alternate cross-link. Phosphoserine is present on residues Ser-312 and Ser-410. Lys-424 is covalently cross-linked (Glycyl lysine isopeptide (Lys-Gly) (interchain with G-Cter in ubiquitin)). 2 NR C4-type zinc fingers span residues 426-446 (CLVC…CGSC) and 462-486 (CAGR…YRKC). Residues 426-491 (CLVCSDEASG…RYRKCLQAGM (66 aa)) constitute a DNA-binding region (nuclear receptor). Residues Lys-485, Lys-497, Lys-499, and Lys-500 each carry the N6-acetyllysine modification. An interaction with CLOCK region spans residues 490 to 782 (GMNLEARKTK…NIKKLLFHQK (293 aa)). A hinge region spans residues 492-528 (NLEARKTKKKIKGIQQATTGVSQETSENSANKTIVPA). The NR LBD domain maps to 529 to 763 (TLPQLTPTLV…FPEMLAEIIT (235 aa)). The interval 537 to 702 (LVSLLEVIEP…EIRMTYIKEL (166 aa)) is interaction with CRY1. Lys-708 is covalently cross-linked (Glycyl lysine isopeptide (Lys-Gly) (interchain with G-Cter in SUMO)).

It belongs to the nuclear hormone receptor family. NR3 subfamily. Heteromultimeric cytoplasmic complex with HSP90AA1, HSPA1A/HSPA1B, and FKBP5 or another immunophilin such as PPID, STIP1, or the immunophilin homolog PPP5C. Upon ligand binding FKBP5 dissociates from the complex and FKBP4 takes its place, thereby linking the complex to dynein and mediating transport to the nucleus, where the complex dissociates. Probably forms a complex composed of chaperones HSP90 and HSP70, co-chaperones CDC37, PPP5C, TSC1 and client protein TSC2, CDK4, AKT, RAF1 and NR3C1; this complex does not contain co-chaperones STIP1/HOP and PTGES3/p23. Directly interacts with UNC45A. Binds to DNA as a homodimer, and as heterodimer with NR3C2 or the retinoid X receptor. Binds STAT5A and STAT5B homodimers and heterodimers. Interacts with NRIP1, POU2F1, POU2F2 and TRIM28. Interacts with several coactivator complexes, including the SMARCA4 complex, CREBBP/EP300, TADA2L (Ada complex) and p160 coactivators such as NCOA2 and NCOA6. Interaction with BAG1 inhibits transactivation. Interacts with HEXIM1 and TGFB1I1. Interacts with NCOA1. Interacts with NCOA3, SMARCA4, SMARCC1, SMARCD1, and SMARCE1. Interacts with CLOCK, CRY1 and CRY2 in a ligand-dependent fashion. Interacts with CIART. Interacts with RWDD3. Interacts with UBE2I/UBC9 and this interaction is enhanced in the presence of RWDD3. Interacts with GRIP1. Interacts with NR4A3 (via nuclear receptor DNA-binding domain), represses transcription activity of NR4A3 on the POMC promoter Nur response element (NurRE). Directly interacts with PNRC2 to attract and form a complex with UPF1 and DCP1A; the interaction leads to rapid mRNA degradation. Interacts with GSK3B. Interacts with FNIP1 and FNIP2. Interacts (via C-terminus) with HNRNPU (via C-terminus). Interacts with MCM3AP. Interacts (via domain NR LBD) with HSP90AA1 and HSP90AB1. In the absence of hormonal ligand, interacts with TACC1. Interacts (via NR LBD domain) with ZNF764 (via KRAB domain); the interaction regulates transcription factor activity of NR3C1 by directing its actions toward certain biologic pathways. Post-translationally, acetylation by CLOCK reduces its binding to glucocorticoid response elements and its transcriptional activity. Increased proteasome-mediated degradation in response to glucocorticoids. In terms of processing, phosphorylated in the absence of hormone; becomes hyperphosphorylated in the presence of glucocorticoid. The Ser-208, Ser-231 and Ser-410-phosphorylated forms are mainly cytoplasmic, and the Ser-216-phosphorylated form is nuclear. Phosphorylation at Ser-216 increases transcriptional activity. Phosphorylation at Ser-208, Ser-231 and Ser-410 decreases signaling capacity. Phosphorylation at Ser-410 may protect from glucocorticoid-induced apoptosis. Phosphorylation at Ser-208 and Ser-216 is not required in regulation of chromosome segregation. May be dephosphorylated by PPP5C, attenuates NR3C1 action. Post-translationally, ubiquitinated by UBR5, leading to its degradation: UBR5 specifically recognizes and binds ligand-bound NR3C1 when it is not associated with coactivators (NCOAs). In presence of NCOAs, the UBR5-degron is not accessible, preventing its ubiquitination and degradation. Sumoylation at Lys-282 and Lys-298 negatively regulates its transcriptional activity. Sumoylation at Lys-708 positively regulates its transcriptional activity in the presence of RWDD3. Sumoylation at Lys-282 and Lys-298 is dispensable whereas sumoylation at Lys-708 is critical for the stimulatory effect of RWDD3 on its transcriptional activity. Heat shock increases sumoylation in a RWDD3-dependent manner.

The protein localises to the cytoplasm. The protein resides in the nucleus. It localises to the mitochondrion. It is found in the cytoskeleton. Its subcellular location is the spindle. The protein localises to the microtubule organizing center. The protein resides in the centrosome. It localises to the chromosome. It is found in the nucleoplasm. In terms of biological role, receptor for glucocorticoids (GC). Has a dual mode of action: as a transcription factor that binds to glucocorticoid response elements (GRE), both for nuclear and mitochondrial DNA, and as a modulator of other transcription factors. Affects inflammatory responses, cellular proliferation and differentiation in target tissues. Involved in chromatin remodeling. Plays a role in rapid mRNA degradation by binding to the 5' UTR of target mRNAs and interacting with PNRC2 in a ligand-dependent manner which recruits the RNA helicase UPF1 and the mRNA-decapping enzyme DCP1A, leading to RNA decay. Could act as a coactivator for STAT5-dependent transcription upon growth hormone (GH) stimulation and could reveal an essential role of hepatic GR in the control of body growth. Mediates glucocorticoid-induced apoptosis. Promotes accurate chromosome segregation during mitosis. May act as a tumor suppressor. May play a negative role in adipogenesis through the regulation of lipolytic and antilipogenic gene expression. The chain is Glucocorticoid receptor (NR3C1) from Sus scrofa (Pig).